The primary structure comprises 137 residues: uncharacterized protein (137 aa).

Residues Ile4 to Ile21 form a helical membrane-spanning segment.

The protein resides in the membrane. This is an uncharacterized protein from Archaeoglobus fulgidus (strain ATCC 49558 / DSM 4304 / JCM 9628 / NBRC 100126 / VC-16).